The following is a 574-amino-acid chain: Arginine--tRNA ligase (574 aa).

The 'HIGH' region motif lies at 121–131; sequence PNIAKEMHIGH.

Belongs to the class-I aminoacyl-tRNA synthetase family. Monomer.

The protein localises to the cytoplasm. The enzyme catalyses tRNA(Arg) + L-arginine + ATP = L-arginyl-tRNA(Arg) + AMP + diphosphate. In Buchnera aphidicola subsp. Acyrthosiphon pisum (strain 5A), this protein is Arginine--tRNA ligase.